A 381-amino-acid chain; its full sequence is ATP-dependent (S)-NAD(P)H-hydrate dehydratase (381 aa).

The YjeF C-terminal domain occupies 84–376; sequence AEAVVRRITP…EFLGKSLEDI (293 aa). (6S)-NADPHX contacts are provided by residues Gly197 and 250-256; that span reads NVYEYKR. Residues 290–294 and 309–318 contribute to the ATP site; these read KGKAD and GSPRRCGGQG. Asp319 contacts (6S)-NADPHX.

This sequence belongs to the NnrD/CARKD family. The cofactor is Mg(2+).

The catalysed reaction is (6S)-NADHX + ATP = ADP + phosphate + NADH + H(+). The enzyme catalyses (6S)-NADPHX + ATP = ADP + phosphate + NADPH + H(+). Catalyzes the dehydration of the S-form of NAD(P)HX at the expense of ATP, which is converted to ADP. Together with NAD(P)HX epimerase, which catalyzes the epimerization of the S- and R-forms, the enzyme allows the repair of both epimers of NAD(P)HX, a damaged form of NAD(P)H that is a result of enzymatic or heat-dependent hydration. This is ATP-dependent (S)-NAD(P)H-hydrate dehydratase from Sorghum bicolor (Sorghum).